The following is a 36-amino-acid chain: Turgencin-A (36 aa).

3 cysteine pairs are disulfide-bonded: Cys-8–Cys-33, Cys-12–Cys-29, and Cys-17–Cys-26. Met-10 is modified (methionine sulfoxide). The residue at position 36 (Val-36) is a Valine amide.

The protein resides in the secreted. Has antimicrobial activity against Gram-positive bacteria (C.glutamicum ATCC 13032 (MIC=0.4 uM), B.subtilis ATCC 23857 (MIC=0.4 uM) and S.aureus ATCC 9144 (MIC=6.3 uM)) and Gram-negative bacteria (E.coli ATCC 25922 (MIC=0.8 uM) and P.aeruginosa ATCC 27853 (MIC=1.6 uM)). The protein is Turgencin-A of Synoicum turgens (Colonial ascidian).